The chain runs to 210 residues: Ribosomal RNA small subunit methyltransferase G (210 aa).

S-adenosyl-L-methionine contacts are provided by residues Gly-75, Phe-80, 98-100, 126-127, and Arg-141; these read EST and AE.

Belongs to the methyltransferase superfamily. RNA methyltransferase RsmG family.

It localises to the cytoplasm. Specifically methylates the N7 position of a guanine in 16S rRNA. The polypeptide is Ribosomal RNA small subunit methyltransferase G (Solibacter usitatus (strain Ellin6076)).